Here is a 355-residue protein sequence, read N- to C-terminus: Adenine deaminase (355 aa).

Zn(2+) contacts are provided by H23, H25, and H211. E214 serves as the catalytic Proton donor. D292 contributes to the Zn(2+) binding site. Substrate is bound at residue D293.

It belongs to the metallo-dependent hydrolases superfamily. Adenosine and AMP deaminases family. Adenine deaminase type 2 subfamily. Zn(2+) serves as cofactor.

It is found in the cytoplasm. The protein localises to the nucleus. It catalyses the reaction adenine + H2O + H(+) = hypoxanthine + NH4(+). Functionally, catalyzes the hydrolytic deamination of adenine to hypoxanthine. Plays an important role in the purine salvage pathway and in nitrogen catabolism. The polypeptide is Adenine deaminase (Kluyveromyces lactis (strain ATCC 8585 / CBS 2359 / DSM 70799 / NBRC 1267 / NRRL Y-1140 / WM37) (Yeast)).